Here is a 229-residue protein sequence, read N- to C-terminus: Ribonuclease 3 (229 aa).

One can recognise an RNase III domain in the interval 4 to 133; the sequence is WEELQESVGF…FIGALYLDNG (130 aa). Glutamate 46 lines the Mg(2+) pocket. Aspartate 50 is a catalytic residue. Mg(2+)-binding residues include aspartate 119 and glutamate 122. Glutamate 122 is an active-site residue. In terms of domain architecture, DRBM spans 159-228; sequence DYKTQLQEIV…AQFAINQLTH (70 aa).

It belongs to the ribonuclease III family. Homodimer. Mg(2+) serves as cofactor.

The protein resides in the cytoplasm. It catalyses the reaction Endonucleolytic cleavage to 5'-phosphomonoester.. Functionally, digests double-stranded RNA. Involved in the processing of primary rRNA transcript to yield the immediate precursors to the large and small rRNAs (23S and 16S). Processes some mRNAs, and tRNAs when they are encoded in the rRNA operon. Processes pre-crRNA and tracrRNA of type II CRISPR loci if present in the organism. In Listeria welshimeri serovar 6b (strain ATCC 35897 / DSM 20650 / CCUG 15529 / CIP 8149 / NCTC 11857 / SLCC 5334 / V8), this protein is Ribonuclease 3.